Here is a 150-residue protein sequence, read N- to C-terminus: Arginine repressor (150 aa).

It belongs to the ArgR family.

It is found in the cytoplasm. The protein operates within amino-acid biosynthesis; L-arginine biosynthesis [regulation]. Regulates arginine biosynthesis genes. In Staphylococcus aureus (strain Mu3 / ATCC 700698), this protein is Arginine repressor.